The chain runs to 404 residues: tRNA (carboxymethyluridine(34)-5-O)-methyltransferase (404 aa).

Residue Ser238 is modified to Phosphoserine.

Interacts with TRM112A and TRM112B.

It carries out the reaction 5-(carboxymethyl)uridine(34) in tRNA + S-adenosyl-L-methionine = 5-(2-methoxy-2-oxoethyl)uridine(34) in tRNA + S-adenosyl-L-homocysteine. In terms of biological role, catalyzes the methylation of 5-carboxymethyl uridine to 5-methylcarboxymethyl uridine at the wobble position of the anticodon loop in tRNA via its methyltransferase domain. Catalyzes the last step in the formation of 5-methylcarboxymethyl uridine at the wobble position of the anticodon loop in target tRNA. This Arabidopsis thaliana (Mouse-ear cress) protein is tRNA (carboxymethyluridine(34)-5-O)-methyltransferase.